Consider the following 167-residue polypeptide: Myelin basic protein (167 aa).

The residue at position 1 (A1) is an N-acetylalanine. Phosphoserine is present on residues S7 and S12. Y14 carries the phosphotyrosine modification. T17 bears the Phosphothreonine mark. Phosphoserine is present on S19. T20 is subject to Phosphothreonine. Residues R25 and R31 each carry the citrulline modification. T35 carries the post-translational modification Phosphothreonine. Position 40 is a phosphoserine (S40). R43 and R49 each carry omega-N-methylarginine. Residues 45 to 87 (FGSDRAAPKRGSGKDSHHAARTTHYGSLPQKSQRSQDENPVVH) form an induces experimental autoimmune encephalomyelitis (EAE) 1 region. The interval 46 to 114 (GSDRAAPKRG…GRGLSLSRFS (69 aa)) is disordered. Residue S56 is modified to Phosphoserine. T67 bears the Phosphothreonine mark. Residue Y69 is modified to Phosphotyrosine. S76 carries the post-translational modification Phosphoserine. Phosphothreonine is present on residues T94 and T97. Q102 carries the post-translational modification Deamidated glutamine. R106 carries the post-translational modification Omega-N-methylarginine; alternate. R106 carries the symmetric dimethylarginine; alternate modification. Residue S114 is modified to Phosphoserine. An induces experimental autoimmune encephalomyelitis (EAE) 2 region spans residues 114–122 (SWGAEGQKP). The residue at position 121 (K121) is an N6-acetyllysine. A Citrulline modification is found at R129. The interval 136–167 (GFKGAHDAQGTLSKIFKLGGRDSRSGSPMARR) is disordered. Q144 is modified (deamidated glutamine). Citrulline is present on R156. At S158 the chain carries Phosphoserine. S162 carries the post-translational modification Phosphoserine; by UHMK1. A Citrulline modification is found at R167.

The protein belongs to the myelin basic protein family. As to quaternary structure, homodimer. Post-translationally, at least 5 charge isomers; C1 (the most cationic, least modified, and most abundant form), C2, C3, C4 and C5 (the least cationic form); are produced as a result of optional post-translational modifications such as phosphorylation of serine or threonine residues, deamidation of glutamine or asparagine residues, citrullination and methylation of arginine residues. C1 and C2 are unphosphorylated, C3 and C4 are monophosphorylated and C5 is phosphorylated at two positions. Phosphorylated by TAOK2, VRK2, MAPK11, MAPK12, MAPK14 and MINK1. In terms of processing, proteolytically cleaved in B cell lysosomes by cathepsin CTSG which degrades the major immunogenic MBP epitope and prevents the activation of MBP-specific autoreactive T cells. Found in both the central and the peripheral nervous system.

The protein localises to the myelin membrane. Its function is as follows. Is, with PLP, the most abundant protein component of the myelin membrane in the CNS. Has a role in both the formation and stabilization of this compact multilayer arrangement of bilayers. Each splice variant and charge isomer may have a specialized function in the assembly of an optimized, biochemically functional myelin membrane. The polypeptide is Myelin basic protein (MBP) (Cavia porcellus (Guinea pig)).